Consider the following 354-residue polypeptide: Trans-L-3-hydroxyproline dehydratase (354 aa).

The active-site Proton acceptor is the C104. Substrate-binding positions include 105 to 106, D269, and 274 to 275; these read GH and GS.

Belongs to the proline racemase family. As to quaternary structure, homodimer.

The enzyme catalyses trans-3-hydroxy-L-proline = 1-pyrroline-2-carboxylate + H2O. Its function is as follows. Catalyzes the dehydration of trans-3-hydroxy-L-proline to delta-1-pyrroline-2-carboxylate (Pyr2C). This chain is Trans-L-3-hydroxyproline dehydratase (L3hypdh), found in Mus musculus (Mouse).